Here is a 62-residue protein sequence, read N- to C-terminus: Neurotoxin 3 (62 aa).

Over residues 1–16 (LECHDQQSSQTPTTTG) the composition is skewed to polar residues. Residues 1 to 22 (LECHDQQSSQTPTTTGCSGGET) are disordered. 4 cysteine pairs are disulfide-bonded: C3/C24, C17/C41, C43/C54, and C55/C60.

This sequence belongs to the three-finger toxin family. Short-chain subfamily. Type I alpha-neurotoxin sub-subfamily. Expressed by the venom gland.

It localises to the secreted. In terms of biological role, binds to muscle nicotinic acetylcholine receptor (nAChR) and inhibit acetylcholine from binding to the receptor, thereby impairing neuromuscular transmission. The sequence is that of Neurotoxin 3 from Naja sputatrix (Malayan spitting cobra).